The following is a 175-amino-acid chain: Peptide deformylase (175 aa).

Cys-96 and His-138 together coordinate Fe cation. Glu-139 is a catalytic residue. His-142 serves as a coordination point for Fe cation.

Belongs to the polypeptide deformylase family. Requires Fe(2+) as cofactor.

The enzyme catalyses N-terminal N-formyl-L-methionyl-[peptide] + H2O = N-terminal L-methionyl-[peptide] + formate. Functionally, removes the formyl group from the N-terminal Met of newly synthesized proteins. Requires at least a dipeptide for an efficient rate of reaction. N-terminal L-methionine is a prerequisite for activity but the enzyme has broad specificity at other positions. The protein is Peptide deformylase of Helicobacter pylori (strain Shi470).